The sequence spans 576 residues: Aspartate--tRNA ligase, cytoplasmic 1 (576 aa).

The disordered stretch occupies residues 1-78 (MSETTPVPVG…NWGELPMNQS (78 aa)). Basic and acidic residues predominate over residues 20 to 43 (LKKEQKKLEKEKKIAEAKAKKAAE). Glutamate 302 lines the L-aspartate pocket. The segment at 324–327 (QLYK) is aspartate. An L-aspartate-binding site is contributed by arginine 346. Residues 346–348 (RAE), 354–356 (RHL), and glutamate 499 contribute to the ATP site. Serine 502 and arginine 506 together coordinate L-aspartate. 547–550 (GLER) provides a ligand contact to ATP.

Belongs to the class-II aminoacyl-tRNA synthetase family. Type 2 subfamily.

Its subcellular location is the cytoplasm. The enzyme catalyses tRNA(Asp) + L-aspartate + ATP = L-aspartyl-tRNA(Asp) + AMP + diphosphate. In Dictyostelium discoideum (Social amoeba), this protein is Aspartate--tRNA ligase, cytoplasmic 1 (aspS1).